The sequence spans 174 residues: D(1B) dopamine receptor (174 aa).

A helical transmembrane segment spans residues 1–10 (SILNLCIISV). At 11-32 (DRYWAISRPFCYERKMTQRVAL) the chain is on the cytoplasmic side. The chain crosses the membrane as a helical span at residues 33-54 (VMVGLAWTLSILISFIPVQLHW). Topologically, residues 55–96 (HRDKVGSRDGLDPPSNLANGTPWEEAGESDRSAENCDSSLNR) are extracellular. Positions 64-88 (GLDPPSNLANGTPWEEAGESDRSAE) are disordered. Asn95 is a glycosylation site (N-linked (GlcNAc...) asparagine). The chain crosses the membrane as a helical span at residues 97–119 (TYAISSSLISFYIPVAIMIVTYT). Residues 120–169 (RIYRIAQVQIRRISSLERAAEHAQSCRSREACAPDSGLRASIKKETKVLK) are Cytoplasmic-facing. The helical transmembrane segment at 170–174 (TLSVI) threads the bilayer.

Belongs to the G-protein coupled receptor 1 family.

It is found in the cell membrane. Its function is as follows. Dopamine receptor whose activity is mediated by G proteins which activate adenylyl cyclase. The protein is D(1B) dopamine receptor (DRD5) of Bos taurus (Bovine).